The primary structure comprises 39 residues: Cytochrome b559 subunit beta (39 aa).

Residues 14–30 form a helical membrane-spanning segment; sequence WLAIHGLAVPTVFFLGS. Histidine 18 contacts heme.

The protein belongs to the PsbE/PsbF family. As to quaternary structure, heterodimer of an alpha subunit and a beta subunit. PSII is composed of 1 copy each of membrane proteins PsbA, PsbB, PsbC, PsbD, PsbE, PsbF, PsbH, PsbI, PsbJ, PsbK, PsbL, PsbM, PsbT, PsbX, PsbY, PsbZ, Psb30/Ycf12, at least 3 peripheral proteins of the oxygen-evolving complex and a large number of cofactors. It forms dimeric complexes. Heme b serves as cofactor.

It is found in the plastid. Its subcellular location is the chloroplast thylakoid membrane. Functionally, this b-type cytochrome is tightly associated with the reaction center of photosystem II (PSII). PSII is a light-driven water:plastoquinone oxidoreductase that uses light energy to abstract electrons from H(2)O, generating O(2) and a proton gradient subsequently used for ATP formation. It consists of a core antenna complex that captures photons, and an electron transfer chain that converts photonic excitation into a charge separation. The sequence is that of Cytochrome b559 subunit beta from Psilotum nudum (Whisk fern).